A 332-amino-acid chain; its full sequence is T-cell surface glycoprotein CD1b2 (332 aa).

The signal sequence occupies residues 1–17 (MLLLVLALLAVLFPAGD). Residues 18-301 (TQDAFPEPIS…ILYWGNSSIG (284 aa)) lie on the Extracellular side of the membrane. Asparagine 38, asparagine 75, and asparagine 146 each carry an N-linked (GlcNAc...) asparagine glycan. Disulfide bonds link cysteine 120-cysteine 184, cysteine 149-cysteine 163, and cysteine 224-cysteine 279. One can recognise an Ig-like domain in the interval 185–295 (PRYLMSVLEA…LGGQDIILYW (111 aa)). Residue asparagine 297 is glycosylated (N-linked (GlcNAc...) asparagine). Residues 302-322 (WIILAVFVSCLIVLLFYVLWF) traverse the membrane as a helical segment. Topologically, residues 323 to 332 (YKHWSYQDIL) are cytoplasmic. Residues 328–331 (YQDI) carry the Internalization signal motif.

As to quaternary structure, heterodimer with B2M (beta-2-microglobulin). Interacts with saposin C.

Its subcellular location is the cell membrane. The protein resides in the endosome membrane. It localises to the lysosome membrane. Its function is as follows. Antigen-presenting protein that binds self and non-self lipid and glycolipid antigens and presents them to T-cell receptors on natural killer T-cells. The polypeptide is T-cell surface glycoprotein CD1b2 (CD1B2) (Cavia porcellus (Guinea pig)).